A 156-amino-acid chain; its full sequence is ATP synthase subunit b (156 aa).

A helical membrane pass occupies residues 5 to 25 (VTLIGQTVAFIIFVWFCMKFV).

This sequence belongs to the ATPase B chain family. As to quaternary structure, F-type ATPases have 2 components, F(1) - the catalytic core - and F(0) - the membrane proton channel. F(1) has five subunits: alpha(3), beta(3), gamma(1), delta(1), epsilon(1). F(0) has three main subunits: a(1), b(2) and c(10-14). The alpha and beta chains form an alternating ring which encloses part of the gamma chain. F(1) is attached to F(0) by a central stalk formed by the gamma and epsilon chains, while a peripheral stalk is formed by the delta and b chains.

The protein localises to the cell inner membrane. Its function is as follows. F(1)F(0) ATP synthase produces ATP from ADP in the presence of a proton or sodium gradient. F-type ATPases consist of two structural domains, F(1) containing the extramembraneous catalytic core and F(0) containing the membrane proton channel, linked together by a central stalk and a peripheral stalk. During catalysis, ATP synthesis in the catalytic domain of F(1) is coupled via a rotary mechanism of the central stalk subunits to proton translocation. Component of the F(0) channel, it forms part of the peripheral stalk, linking F(1) to F(0). This chain is ATP synthase subunit b, found in Shewanella loihica (strain ATCC BAA-1088 / PV-4).